Reading from the N-terminus, the 354-residue chain is UDP-N-acetylglucosamine--N-acetylmuramyl-(pentapeptide) pyrophosphoryl-undecaprenol N-acetylglucosamine transferase (354 aa).

UDP-N-acetyl-alpha-D-glucosamine contacts are provided by residues Ser11–Gly13, Arg164, Ser194, and Gln289.

This sequence belongs to the glycosyltransferase 28 family. MurG subfamily.

The protein localises to the cell membrane. The catalysed reaction is di-trans,octa-cis-undecaprenyl diphospho-N-acetyl-alpha-D-muramoyl-L-alanyl-D-glutamyl-meso-2,6-diaminopimeloyl-D-alanyl-D-alanine + UDP-N-acetyl-alpha-D-glucosamine = di-trans,octa-cis-undecaprenyl diphospho-[N-acetyl-alpha-D-glucosaminyl-(1-&gt;4)]-N-acetyl-alpha-D-muramoyl-L-alanyl-D-glutamyl-meso-2,6-diaminopimeloyl-D-alanyl-D-alanine + UDP + H(+). Its pathway is cell wall biogenesis; peptidoglycan biosynthesis. Functionally, cell wall formation. Catalyzes the transfer of a GlcNAc subunit on undecaprenyl-pyrophosphoryl-MurNAc-pentapeptide (lipid intermediate I) to form undecaprenyl-pyrophosphoryl-MurNAc-(pentapeptide)GlcNAc (lipid intermediate II). This Shouchella clausii (strain KSM-K16) (Alkalihalobacillus clausii) protein is UDP-N-acetylglucosamine--N-acetylmuramyl-(pentapeptide) pyrophosphoryl-undecaprenol N-acetylglucosamine transferase.